The chain runs to 212 residues: Ribonuclease HII (212 aa).

Positions 18 to 212 (GCVFGVDEAG…APVAQQELFR (195 aa)) constitute an RNase H type-2 domain. The a divalent metal cation site is built by aspartate 24, glutamate 25, and aspartate 118.

This sequence belongs to the RNase HII family. It depends on Mn(2+) as a cofactor. Mg(2+) is required as a cofactor.

Its subcellular location is the cytoplasm. It carries out the reaction Endonucleolytic cleavage to 5'-phosphomonoester.. Its function is as follows. Endonuclease that specifically degrades the RNA of RNA-DNA hybrids. The polypeptide is Ribonuclease HII (Erythrobacter litoralis (strain HTCC2594)).